Consider the following 459-residue polypeptide: Asparagine--tRNA ligase (459 aa).

Belongs to the class-II aminoacyl-tRNA synthetase family. Homodimer.

The protein resides in the cytoplasm. It catalyses the reaction tRNA(Asn) + L-asparagine + ATP = L-asparaginyl-tRNA(Asn) + AMP + diphosphate + H(+). This chain is Asparagine--tRNA ligase, found in Pelobacter propionicus (strain DSM 2379 / NBRC 103807 / OttBd1).